Consider the following 256-residue polypeptide: Ribosomal RNA small subunit methyltransferase A (256 aa).

Residues Asn12, Leu14, Gly39, Glu60, Asp85, and Asn103 each coordinate S-adenosyl-L-methionine.

It belongs to the class I-like SAM-binding methyltransferase superfamily. rRNA adenine N(6)-methyltransferase family. RsmA subfamily.

It is found in the cytoplasm. It carries out the reaction adenosine(1518)/adenosine(1519) in 16S rRNA + 4 S-adenosyl-L-methionine = N(6)-dimethyladenosine(1518)/N(6)-dimethyladenosine(1519) in 16S rRNA + 4 S-adenosyl-L-homocysteine + 4 H(+). In terms of biological role, specifically dimethylates two adjacent adenosines (A1518 and A1519) in the loop of a conserved hairpin near the 3'-end of 16S rRNA in the 30S particle. May play a critical role in biogenesis of 30S subunits. This is Ribosomal RNA small subunit methyltransferase A from Legionella pneumophila (strain Lens).